The following is an 87-amino-acid chain: MDSYSSPPMGGSGSSVSPEVMMESVKTQLAQAYAEELIETLRTKCFDKCVTKPGSSLGGSESSCISRCVERYMEATAIISRSLFTQR.

Residues M1–V20 form a disordered region. The short motif at C45–C68 is the Twin CX3C motif element. Intrachain disulfides connect C45–C68 and C49–C64.

This sequence belongs to the small Tim family. In terms of assembly, heterohexamer; composed of 3 copies of TIM8 and 3 copies of TIM13, named soluble 70 kDa complex. Associates with the TIM22 complex, whose core is composed of TIM22. In terms of tissue distribution, expressed in roots, flowers, young cotyledons and leaves.

The protein resides in the mitochondrion intermembrane space. Mitochondrial intermembrane chaperone that participates in the import and insertion of some multi-pass transmembrane proteins into the mitochondrial inner membrane. Also required for the transfer of beta-barrel precursors from the TOM complex to the sorting and assembly machinery (SAM complex) of the outer membrane. Acts as a chaperone-like protein that protects the hydrophobic precursors from aggregation and guide them through the mitochondrial intermembrane space. The TIM8-TIM13 complex mediates the import of some proteins while the predominant TIM9-TIM10 70 kDa complex mediates the import of much more proteins. The polypeptide is Mitochondrial import inner membrane translocase subunit TIM13 (TIM13) (Arabidopsis thaliana (Mouse-ear cress)).